Consider the following 402-residue polypeptide: MAVRKEKVQPFRECGIAIAVLVGIFIGCVCTILIPNDFVNFRSSKVASASCESPERVKMFKAEFAIISEKNGELRKQVSDLTEKVRLAEQKEVIKAGPFGTVTGLQTNPTVAPDESANPRLAKLLEKVAVNKEIIVVLANNNVKPMLEVQIASVKRVGIQNYLVVPLDDSLESFCKSNEVAYYKRDPDNAIDVVGKSRRSSDVSGLKFRVLREFLQLGYGVLLSDVDIVFLQNPFGHLYRDSDVESMSDGHDNNTAYGFNDVFDDPTMTRSRTVYTNRIWVFNSGFFYLRPTLPSIELLDRVTDTLSKSGGWDQAVFNQHLFYPSHPGYTGLYASKRVMDVYEFMNSRVLFKTVRKDEEMKKLKPVIIHMNYHSDKLERMQAAVEFYVNGKQDALDRFRDGS.

The Cytoplasmic portion of the chain corresponds to 1–13 (MAVRKEKVQPFRE). Residues 14–34 (CGIAIAVLVGIFIGCVCTILI) form a helical; Signal-anchor for type II membrane protein membrane-spanning segment. Residues 35–402 (PNDFVNFRSS…DALDRFRDGS (368 aa)) lie on the Lumenal side of the membrane. A DXD motif motif is present at residues 225-227 (DVD). An N-linked (GlcNAc...) asparagine glycan is attached at asparagine 253.

Belongs to the glycosyltransferase 77 family. Expressed in leaf meristem and at points of cauline leaf attachments on the primary stem. Expressed at low levels in siliques.

It localises to the golgi apparatus membrane. Plays a role in the arabinosylation of cell wall components. Involved in the arabinosylation of extensin proteins in root hair cells. Extensins are structural glycoproteins present in cell walls and its arabinosylation is important for root hair cell development. In Arabidopsis thaliana (Mouse-ear cress), this protein is Arabinosyltransferase RRA1.